Consider the following 265-residue polypeptide: Ni-sirohydrochlorin a,c-diamide reductive cyclase complex, component CfbC (265 aa).

It belongs to the NifH/BchL/ChlL family. In terms of assembly, homodimer. The Ni-sirohydrochlorin a,c-diamide reductive cyclase complex is composed of a NifH homolog component CfbC and a NifD homolog component CfbD. The cofactor is [4Fe-4S] cluster.

The catalysed reaction is Ni-sirohydrochlorin a,c-diamide + 3 AH2 + ATP + H2O = 15,17(3)-seco-F430-17(3)-acid + 3 A + ADP + phosphate. Its function is as follows. Involved in the biosynthesis of the unique nickel-containing tetrapyrrole coenzyme F430, the prosthetic group of methyl-coenzyme M reductase (MCR), which plays a key role in methanogenesis and anaerobic methane oxidation. Catalyzes both the six-electron reduction of the tetrahydroporphyrin ring system and the gamma-lactamization of the c-acetamide side chain of Ni-sirohydrochlorin a,c-diamide to yield 15,17(3)-seco-F430-17(3)-acid (seco-F430), the last intermediate in the biosynthesis of the coenzyme F430. This Methanosarcina barkeri (strain Fusaro / DSM 804) protein is Ni-sirohydrochlorin a,c-diamide reductive cyclase complex, component CfbC.